A 216-amino-acid polypeptide reads, in one-letter code: Deoxyribose-phosphate aldolase (216 aa).

The active-site Proton donor/acceptor is Asp-89. Catalysis depends on Lys-153, which acts as the Schiff-base intermediate with acetaldehyde. Residue Lys-182 is the Proton donor/acceptor of the active site.

It belongs to the DeoC/FbaB aldolase family. DeoC type 1 subfamily.

Its subcellular location is the cytoplasm. It carries out the reaction 2-deoxy-D-ribose 5-phosphate = D-glyceraldehyde 3-phosphate + acetaldehyde. Its pathway is carbohydrate degradation; 2-deoxy-D-ribose 1-phosphate degradation; D-glyceraldehyde 3-phosphate and acetaldehyde from 2-deoxy-alpha-D-ribose 1-phosphate: step 2/2. In terms of biological role, catalyzes a reversible aldol reaction between acetaldehyde and D-glyceraldehyde 3-phosphate to generate 2-deoxy-D-ribose 5-phosphate. This chain is Deoxyribose-phosphate aldolase, found in Treponema denticola (strain ATCC 35405 / DSM 14222 / CIP 103919 / JCM 8153 / KCTC 15104).